The chain runs to 791 residues: Phenylalanine--tRNA ligase beta subunit (791 aa).

Positions 39 to 147 (GDALGQVVVA…DDAPVGQALA (109 aa)) constitute a tRNA-binding domain. Residues 400 to 475 (PQPASILLRR…RIHGYDRVPT (76 aa)) enclose the B5 domain. 4 residues coordinate Mg(2+): aspartate 453, aspartate 459, glutamate 462, and glutamate 463. The FDX-ACB domain occupies 697-790 (SRYPSMRRDL…IEREHRARIR (94 aa)).

Belongs to the phenylalanyl-tRNA synthetase beta subunit family. Type 1 subfamily. In terms of assembly, tetramer of two alpha and two beta subunits. The cofactor is Mg(2+).

It is found in the cytoplasm. It carries out the reaction tRNA(Phe) + L-phenylalanine + ATP = L-phenylalanyl-tRNA(Phe) + AMP + diphosphate + H(+). This Xanthomonas campestris pv. campestris (strain 8004) protein is Phenylalanine--tRNA ligase beta subunit.